Here is a 146-residue protein sequence, read N- to C-terminus: Hemoglobin subunit theta (146 aa).

The Globin domain occupies 2–146; that stretch reads HFTAEEKSVI…VATALAHKYH (145 aa). The heme b site is built by His63 and His92.

It belongs to the globin family.

This is Hemoglobin subunit theta from Sus scrofa (Pig).